The following is a 134-amino-acid chain: Holo-[acyl-carrier-protein] synthase (134 aa).

Residues Asp8 and Glu57 each coordinate Mg(2+).

The protein belongs to the P-Pant transferase superfamily. AcpS family. Mg(2+) serves as cofactor.

It localises to the cytoplasm. It catalyses the reaction apo-[ACP] + CoA = holo-[ACP] + adenosine 3',5'-bisphosphate + H(+). Functionally, transfers the 4'-phosphopantetheine moiety from coenzyme A to a Ser of acyl-carrier-protein. This Roseobacter denitrificans (strain ATCC 33942 / OCh 114) (Erythrobacter sp. (strain OCh 114)) protein is Holo-[acyl-carrier-protein] synthase.